Here is a 156-residue protein sequence, read N- to C-terminus: Large ribosomal subunit protein uL22 (156 aa).

Belongs to the universal ribosomal protein uL22 family. As to quaternary structure, part of the 50S ribosomal subunit.

Its function is as follows. This protein binds specifically to 23S rRNA. It makes multiple contacts with different domains of the 23S rRNA in the assembled 50S subunit and ribosome. Functionally, the globular domain of the protein is located near the polypeptide exit tunnel on the outside of the subunit, while an extended beta-hairpin is found that lines the wall of the exit tunnel in the center of the 70S ribosome. This Sulfolobus acidocaldarius (strain ATCC 33909 / DSM 639 / JCM 8929 / NBRC 15157 / NCIMB 11770) protein is Large ribosomal subunit protein uL22.